The chain runs to 490 residues: GTPase Der (490 aa).

EngA-type G domains lie at 3–166 and 203–376; these read PVVA…MEDL and IKLA…DSST. Residues 9–16, 56–60, 118–121, 209–216, 256–260, and 321–324 each bind GTP; these read GRPNVGKS, DTGGI, NKTD, DTAGV, and NKWD. A KH-like domain is found at 377–461; the sequence is RRVGTSMLTR…PIRIQFKEGE (85 aa).

This sequence belongs to the TRAFAC class TrmE-Era-EngA-EngB-Septin-like GTPase superfamily. EngA (Der) GTPase family. As to quaternary structure, associates with the 50S ribosomal subunit.

Its function is as follows. GTPase that plays an essential role in the late steps of ribosome biogenesis. This is GTPase Der from Shigella flexneri serotype 5b (strain 8401).